The following is a 199-amino-acid chain: GTP cyclohydrolase-2 (199 aa).

49-53 (RVHSE) contacts GTP. Cys-54, Cys-65, and Cys-67 together coordinate Zn(2+). GTP contacts are provided by residues Gln-70, 92 to 94 (EGR), and Thr-114. Asp-126 functions as the Proton acceptor in the catalytic mechanism. Residue Arg-128 is the Nucleophile of the active site. The GTP site is built by Thr-149 and Lys-154.

Belongs to the GTP cyclohydrolase II family. Requires Zn(2+) as cofactor.

It catalyses the reaction GTP + 4 H2O = 2,5-diamino-6-hydroxy-4-(5-phosphoribosylamino)-pyrimidine + formate + 2 phosphate + 3 H(+). Its pathway is cofactor biosynthesis; riboflavin biosynthesis; 5-amino-6-(D-ribitylamino)uracil from GTP: step 1/4. Catalyzes the conversion of GTP to 2,5-diamino-6-ribosylamino-4(3H)-pyrimidinone 5'-phosphate (DARP), formate and pyrophosphate. The protein is GTP cyclohydrolase-2 of Baumannia cicadellinicola subsp. Homalodisca coagulata.